Here is a 462-residue protein sequence, read N- to C-terminus: MATVHLRIGDLVWGKLGRYPPWPGKVVSPPKDLKKPRGKKCFFVKFFGTEDHAWIKVEQLKPYHPHKEEMIKVNKGKRFQQAVDAVEEYLKKAKGKDQSHSDDKSKSDKGRKAAKPMKIIEEDDEDAFKGGSSDKPASSMEPITKRLKIIEEDTRSTSIQAADSTAINGSITPTDKRIGFLGLGLMGSGVVSNLLKMGHVVTVWNRTAEKCDLFIQEGARLGRTPAEVVSMCDITFSCVSDPKAARDLVLGPSGVLQGIRPGKCYVEMSTVDPETITELSQVITSRGGRFLEAPVSGSQQLSNDGMLVIVAAGDRSVYEDCSSCFQAMGKTSFFIAGEAGNAARMMLILNMVQGSFMATIAEGLTLAQATGQSQQTFLDILCQGQMASTFVDQKCQNILQGNFKPDYYLKHIQKDLRLAISMGDSVNHPTPMAAAANEVYKRAKALDQSDNDMSAVYRAYIH.

The PWWP domain maps to 8-66 (IGDLVWGKLGRYPPWPGKVVSPPKDLKKPRGKKCFFVKFFGTEDHAWIKVEQLKPYHPH). Basic and acidic residues predominate over residues 91–111 (KKAKGKDQSHSDDKSKSDKGR). A disordered region spans residues 91–139 (KKAKGKDQSHSDDKSKSDKGRKAAKPMKIIEEDDEDAFKGGSSDKPASS). The interval 169–462 (GSITPTDKRI…MSAVYRAYIH (294 aa)) is dehydrogenase domain. NAD(+) is bound by residues 179–193 (GFLG…VVSN), T270, and K414.

It belongs to the HIBADH-related family. NP60 subfamily. Homotetramere. Binds to mononucleosomes.

It is found in the nucleus. The protein resides in the chromosome. Functionally, may have oxidoreductase activity. Regulates p38 MAP kinase activity by mediating stress activation of mapk14 and specifically regulating mapk14 signaling. Its function is as follows. Cytokine-like nuclear factor with chromatin gene reader activity involved in chromatin modification and regulation of gene expression. Acts as a nucleosome-destabilizing factor that is recruited to genes during transcriptional activation. Recognizes and binds histone H3 without a preference for specific epigenetic markers and also binds DNA. Interacts with KDM1B and promotes its histone demethylase activity by facilitating the capture of H3 tails, they form a multifunctional enzyme complex that modifies transcribed chromatin and facilitates Pol II transcription through nucleosomes. The chain is Cytokine-like nuclear factor N-PAC (glyr1) from Danio rerio (Zebrafish).